The sequence spans 228 residues: Phosphoglycolate phosphatase (228 aa).

Catalysis depends on D9, which acts as the Nucleophile. The Mg(2+) site is built by D9 and D11. K151 provides a ligand contact to substrate. Residues D174 and D178 each coordinate Mg(2+).

The protein belongs to the archaeal SPP-like hydrolase family. The cofactor is Mg(2+).

It carries out the reaction 2-phosphoglycolate + H2O = glycolate + phosphate. Functionally, catalyzes the dephosphorylation of 2-phosphoglycolate. This Pyrobaculum aerophilum (strain ATCC 51768 / DSM 7523 / JCM 9630 / CIP 104966 / NBRC 100827 / IM2) protein is Phosphoglycolate phosphatase.